The primary structure comprises 499 residues: uncharacterized protein (499 aa).

A run of 12 helical transmembrane segments spans residues 51 to 71, 98 to 118, 127 to 147, 155 to 175, 187 to 207, 220 to 240, 301 to 321, 325 to 345, 352 to 372, 378 to 398, 412 to 432, and 444 to 464; these read LLFR…LVAF, IIAS…TLLM, LAFI…CHNF, LVLG…LTMI, YLFA…YAVL, WLFI…YFII, CLYG…YTSL, YMTI…SFLS, GIIL…LLAC, VLYF…GLNV, ATAI…AGQI, and LTSL…IFFL.

It belongs to the major facilitator superfamily. Allantoate permease family.

It localises to the golgi apparatus. The protein localises to the membrane. This is an uncharacterized protein from Schizosaccharomyces pombe (strain 972 / ATCC 24843) (Fission yeast).